Reading from the N-terminus, the 370-residue chain is tRNA pseudouridine synthase D (370 aa).

Aspartate 77 (nucleophile) is an active-site residue. A TRUD domain is found at 152–297 (GVPNYFGEQR…LEQERRPLLL (146 aa)).

The protein belongs to the pseudouridine synthase TruD family.

It carries out the reaction uridine(13) in tRNA = pseudouridine(13) in tRNA. Responsible for synthesis of pseudouridine from uracil-13 in transfer RNAs. In Shewanella oneidensis (strain ATCC 700550 / JCM 31522 / CIP 106686 / LMG 19005 / NCIMB 14063 / MR-1), this protein is tRNA pseudouridine synthase D.